The following is a 113-amino-acid chain: Type III endosome membrane protein TEMP (113 aa).

Residues 1–22 (MNETNKTLVGPSELPTASAVAP) are disordered. The Extracellular portion of the chain corresponds to 1-29 (MNETNKTLVGPSELPTASAVAPGPGTGAR). N-linked (GlcNAc...) asparagine glycosylation is present at Asn5. A helical; Signal-anchor for type III membrane protein transmembrane segment spans residues 30–50 (AWPVLVGFVLGAVVLSLLIAL). The Cytoplasmic portion of the chain corresponds to 51–113 (AAKCHLCRRY…TEGSRDHFSL (63 aa)). Positions 66–113 (HRPLPETGRGGRPQVAEDEDDDGFIEDNYIQPGTGELGTEGSRDHFSL) are disordered. A compositionally biased stretch (acidic residues) spans 81–90 (AEDEDDDGFI).

The protein resides in the membrane. Its subcellular location is the early endosome. The protein localises to the recycling endosome. It localises to the cell membrane. Functionally, may be involved in membrane trafficking between endosomes and plasma membrane. The chain is Type III endosome membrane protein TEMP (C1orf210) from Homo sapiens (Human).